Here is a 283-residue protein sequence, read N- to C-terminus: Probable 3-deoxy-manno-octulosonic acid transferase (283 aa).

The protein localises to the cytoplasm. It catalyses the reaction an alpha-Kdo-(2-&gt;4)-alpha-Kdo-(2-&gt;6)-lipid IVA + CMP-3-deoxy-beta-D-manno-octulosonate = an alpha-Kdo-(2-&gt;4)-alpha-Kdo-(2-&gt;4)-alpha-Kdo-(2-&gt;6)-lipid IVA + CMP + H(+). The catalysed reaction is alpha-Kdo-(2-&gt;4)-alpha-Kdo-(2-&gt;6)-lipid IVA (E. coli) + CMP-3-deoxy-beta-D-manno-octulosonate = alpha-Kdo-(2-&gt;4)-alpha-Kdo-(2-&gt;4)-alpha-Kdo-(2-&gt;6)-lipid IVA + CMP + H(+). It functions in the pathway bacterial outer membrane biogenesis; LPS core biosynthesis. The protein operates within bacterial outer membrane biogenesis; LOS core biosynthesis. In terms of biological role, involved in the biosynthesis of the core oligosaccharide region of lipopolysaccharide (LPS). Required for the addition of 3-deoxy-D-manno-oct-2-ulosonic acid III (KdoIII) to the KdoII residue of the inner lipopolysaccharide core. May also play a role in a lipooligosaccharide (LOS) biosynthesis pathway. This is Probable 3-deoxy-manno-octulosonic acid transferase from Escherichia coli (strain K12).